Consider the following 294-residue polypeptide: Ethylene-inducing xylanase 3 (294 aa).

An N-terminal signal peptide occupies residues 1-19 (MVCFSSLFVAASAIAGVFA). The 196-residue stretch at 31–226 (QSTPSSQGTH…SSGSARINVA (196 aa)) folds into the GH11 domain. The Nucleophile role is filled by E122. The active-site Proton donor is E213. The 36-residue stretch at 259–294 (SCAARWGQCGGSGWNGATCCSAGTCQAQNQWYSQCL) folds into the CBM1 domain.

It belongs to the glycosyl hydrolase 11 (cellulase G) family.

It catalyses the reaction Endohydrolysis of (1-&gt;4)-beta-D-xylosidic linkages in xylans.. It functions in the pathway glycan degradation; xylan degradation. In terms of biological role, endo-1,4-beta-xylanase involved in the hydrolysis of xylan, a major structural heterogeneous polysaccharide found in plant biomass representing the second most abundant polysaccharide in the biosphere, after cellulose. Exhibits immunity-inducing activity in Nicotiana benthamiana. Can induce strong oxidative burst, activate the expression of defense-related genes, and increase resistance against oomycete and fungal pathogens in N.benthamiana. This is Ethylene-inducing xylanase 3 from Verticillium dahliae (strain VdLs.17 / ATCC MYA-4575 / FGSC 10137) (Verticillium wilt).